Consider the following 227-residue polypeptide: Cytochrome c oxidase subunit 2 (227 aa).

The Mitochondrial intermembrane segment spans residues 1-14; the sequence is MAYPFQLGFQDATS. The helical transmembrane segment at 15-45 threads the bilayer; that stretch reads PIMEELLHFHDHTLMIVFLISSLVLYIISLM. Residues 46-59 are Mitochondrial matrix-facing; sequence LTTKLTHTSTMDAQ. The helical transmembrane segment at 60 to 87 threads the bilayer; that stretch reads EVETIWTILPAIILILIALPSLRILYMM. Residues 88–227 lie on the Mitochondrial intermembrane side of the membrane; sequence DEINNPSLTV…HFEKWSASML (140 aa). Cu cation is bound by residues histidine 161, cysteine 196, glutamate 198, cysteine 200, histidine 204, and methionine 207. Glutamate 198 serves as a coordination point for Mg(2+).

Belongs to the cytochrome c oxidase subunit 2 family. As to quaternary structure, component of the cytochrome c oxidase (complex IV, CIV), a multisubunit enzyme composed of 14 subunits. The complex is composed of a catalytic core of 3 subunits MT-CO1, MT-CO2 and MT-CO3, encoded in the mitochondrial DNA, and 11 supernumerary subunits COX4I, COX5A, COX5B, COX6A, COX6B, COX6C, COX7A, COX7B, COX7C, COX8 and NDUFA4, which are encoded in the nuclear genome. The complex exists as a monomer or a dimer and forms supercomplexes (SCs) in the inner mitochondrial membrane with NADH-ubiquinone oxidoreductase (complex I, CI) and ubiquinol-cytochrome c oxidoreductase (cytochrome b-c1 complex, complex III, CIII), resulting in different assemblies (supercomplex SCI(1)III(2)IV(1) and megacomplex MCI(2)III(2)IV(2)). Found in a complex with TMEM177, COA6, COX18, COX20, SCO1 and SCO2. Interacts with TMEM177 in a COX20-dependent manner. Interacts with COX20. Interacts with COX16. Requires Cu cation as cofactor.

It localises to the mitochondrion inner membrane. It catalyses the reaction 4 Fe(II)-[cytochrome c] + O2 + 8 H(+)(in) = 4 Fe(III)-[cytochrome c] + 2 H2O + 4 H(+)(out). Functionally, component of the cytochrome c oxidase, the last enzyme in the mitochondrial electron transport chain which drives oxidative phosphorylation. The respiratory chain contains 3 multisubunit complexes succinate dehydrogenase (complex II, CII), ubiquinol-cytochrome c oxidoreductase (cytochrome b-c1 complex, complex III, CIII) and cytochrome c oxidase (complex IV, CIV), that cooperate to transfer electrons derived from NADH and succinate to molecular oxygen, creating an electrochemical gradient over the inner membrane that drives transmembrane transport and the ATP synthase. Cytochrome c oxidase is the component of the respiratory chain that catalyzes the reduction of oxygen to water. Electrons originating from reduced cytochrome c in the intermembrane space (IMS) are transferred via the dinuclear copper A center (CU(A)) of subunit 2 and heme A of subunit 1 to the active site in subunit 1, a binuclear center (BNC) formed by heme A3 and copper B (CU(B)). The BNC reduces molecular oxygen to 2 water molecules using 4 electrons from cytochrome c in the IMS and 4 protons from the mitochondrial matrix. This chain is Cytochrome c oxidase subunit 2 (MT-CO2), found in Ceratotherium simum (White rhinoceros).